We begin with the raw amino-acid sequence, 299 residues long: Oxygen-dependent coproporphyrinogen-III oxidase (299 aa).

A substrate-binding site is contributed by S92. A divalent metal cation is bound by residues H96 and H106. The active-site Proton donor is the H106. Residue 108 to 110 (NVR) participates in substrate binding. The a divalent metal cation site is built by H145 and H175. The tract at residues 240–275 (YVEFNLVWDRGTLFGLQTGGRTESILMSMPPLVRWE) is important for dimerization. 258–260 (GGR) lines the substrate pocket.

The protein belongs to the aerobic coproporphyrinogen-III oxidase family. In terms of assembly, homodimer. The cofactor is a divalent metal cation.

It is found in the cytoplasm. The catalysed reaction is coproporphyrinogen III + O2 + 2 H(+) = protoporphyrinogen IX + 2 CO2 + 2 H2O. The protein operates within porphyrin-containing compound metabolism; protoporphyrin-IX biosynthesis; protoporphyrinogen-IX from coproporphyrinogen-III (O2 route): step 1/1. Functionally, involved in the heme biosynthesis. Catalyzes the aerobic oxidative decarboxylation of propionate groups of rings A and B of coproporphyrinogen-III to yield the vinyl groups in protoporphyrinogen-IX. This chain is Oxygen-dependent coproporphyrinogen-III oxidase, found in Salmonella schwarzengrund (strain CVM19633).